The chain runs to 213 residues: Large ribosomal subunit protein uL1 (213 aa).

It belongs to the universal ribosomal protein uL1 family.

The polypeptide is Large ribosomal subunit protein uL1 (RPL10A) (Chlamydomonas reinhardtii (Chlamydomonas smithii)).